The sequence spans 264 residues: DNA repair protein RecO (264 aa).

This sequence belongs to the RecO family.

Involved in DNA repair and RecF pathway recombination. The polypeptide is DNA repair protein RecO (Prosthecochloris aestuarii (strain DSM 271 / SK 413)).